A 519-amino-acid chain; its full sequence is Chromobox protein homolog 2 (519 aa).

A Chromo domain is found at 12–70; the sequence is FAAECILSKRLRKGKLEYLVKWRGWSSKHNSWEPEENILDPRLLLAFQKKEHEKEVQNR. A compositionally biased stretch (basic and acidic residues) spans 60–69; that stretch reads KKEHEKEVQN. A disordered region spans residues 60 to 180; it reads KKEHEKEVQN…PPEQKAARRP (121 aa). Positions 70 to 84 are enriched in basic residues; the sequence is RKRGKRPRGRPRKHT. Residues 75-87 constitute a DNA-binding region (a.T hook); sequence RPRGRPRKHTVTS. Residues 103-119 show a composition bias toward low complexity; that stretch reads KSKSSSSSSSSTSSSSS. Positions 129–141 are enriched in basic and acidic residues; sequence LDSKRGPRGRETH. Residues Lys-147 and Lys-154 each participate in a glycyl lysine isopeptide (Lys-Gly) (interchain with G-Cter in SUMO2) cross-link. A Nuclear localization signal motif is present at residues 164 to 169; it reads KRGRKP. Asymmetric dimethylarginine; alternate is present on Arg-248. Arg-248 carries the omega-N-methylarginine; alternate modification. Disordered stretches follow at residues 295 to 336 and 367 to 464; these read QKGG…LAPT and AIPA…TSLP. Ser-303 is subject to Phosphoserine. Polar residues-rich tracts occupy residues 321–336 and 384–395; these read QRGN…LAPT and TGANMTNAPTDN. The segment covering 453–464 has biased composition (low complexity); that stretch reads SSDSDPDSTSLP.

Component of a PRC1-like complex. The composition of the PRC1 complex may differ between the PRC1 complex in pluripotent embryonic stem cells containing RNF2, CBX7 and PCGF2, and the PRC1 complex in differentiating cells containing RNF2, CBX2, CBX4 and BMI1. Interacts with RING1/RNF2. Interacts (via chromodomain) with histone H3K9Me3 and H3K27me3. May interact with H3C15 and H3C1. Expressed in embryoid bodies.

It localises to the nucleus speckle. The protein resides in the chromosome. In terms of biological role, component of a Polycomb group (PcG) multiprotein PRC1-like complex, a complex class required to maintain the transcriptionally repressive state of many genes, including Hox genes, throughout development. PcG PRC1 complex acts via chromatin remodeling and modification of histones; it mediates monoubiquitination of histone H2A 'Lys-119', rendering chromatin heritably changed in its expressibility. Binds to histone H3 trimethylated at 'Lys-9' (H3K9me3) or at 'Lys-27' (H3K27me3). Plays a role in the lineage differentiation of the germ layers in embryonic development. Involved in sexual development, acting as activator of NR5A1 expression. In Mus musculus (Mouse), this protein is Chromobox protein homolog 2 (Cbx2).